Reading from the N-terminus, the 648-residue chain is Replication restart protein PriA (648 aa).

The 167-residue stretch at 131–297 folds into the Helicase ATP-binding domain; it reads TILNESNKPT…EIGKYQLVTL (167 aa). 144–151 is a binding site for ATP; it reads GVTGSGKT. The DEAH box signature appears at 240 to 243; that stretch reads DEEH. Zn(2+)-binding residues include C358, C361, C367, C370, C385, C388, C398, and C401. The 156-residue stretch at 393 to 548 folds into the Helicase C-terminal domain; sequence KIFSSCPECL…SFFANELEIR (156 aa).

The protein belongs to the helicase family. PriA subfamily. Component of the replication restart primosome. Requires Zn(2+) as cofactor.

The enzyme catalyses Couples ATP hydrolysis with the unwinding of duplex DNA by translocating in the 3'-5' direction.. It catalyses the reaction ATP + H2O = ADP + phosphate + H(+). In terms of biological role, initiates the restart of stalled replication forks, which reloads the replicative helicase on sites other than the origin of replication. Recognizes and binds to abandoned replication forks and remodels them to uncover a helicase loading site. Promotes assembly of the primosome at these replication forks. The chain is Replication restart protein PriA from Rickettsia felis (strain ATCC VR-1525 / URRWXCal2) (Rickettsia azadi).